We begin with the raw amino-acid sequence, 475 residues long: 3-isopropylmalate dehydratase large subunit (475 aa).

Positions 349, 409, and 412 each coordinate [4Fe-4S] cluster.

It belongs to the aconitase/IPM isomerase family. LeuC type 1 subfamily. In terms of assembly, heterodimer of LeuC and LeuD. Requires [4Fe-4S] cluster as cofactor.

It catalyses the reaction (2R,3S)-3-isopropylmalate = (2S)-2-isopropylmalate. It functions in the pathway amino-acid biosynthesis; L-leucine biosynthesis; L-leucine from 3-methyl-2-oxobutanoate: step 2/4. Its function is as follows. Catalyzes the isomerization between 2-isopropylmalate and 3-isopropylmalate, via the formation of 2-isopropylmaleate. The protein is 3-isopropylmalate dehydratase large subunit of Cereibacter sphaeroides (strain ATCC 17029 / ATH 2.4.9) (Rhodobacter sphaeroides).